We begin with the raw amino-acid sequence, 516 residues long: Gamma-aminobutyrate transaminase 1, mitochondrial (516 aa).

The N-terminal 47 residues, 1–47 (MVIARGLLRSNASSSSSQAINLLKYVTSTGSLQGHTQNLCDASTRHF), are a transit peptide targeting the mitochondrion. Residues 45-60 (RHFSSVPSPQSNSTEE) are compositionally biased toward polar residues. The disordered stretch occupies residues 45-64 (RHFSSVPSPQSNSTEENGFK). Residue 171-172 (GS) coordinates pyridoxal 5'-phosphate. Tyrosine 204 is a binding site for substrate. Pyridoxal 5'-phosphate is bound at residue aspartate 311. Lysine 340 is a binding site for substrate. An N6-(pyridoxal phosphate)lysine modification is found at lysine 340.

This sequence belongs to the class-III pyridoxal-phosphate-dependent aminotransferase family.

It is found in the mitochondrion. It carries out the reaction 4-aminobutanoate + pyruvate = succinate semialdehyde + L-alanine. The catalysed reaction is 4-aminobutanoate + glyoxylate = succinate semialdehyde + glycine. Its function is as follows. Transaminase that degrades gamma-amino butyric acid (GABA) and uses pyruvate as amino-group acceptor, but not 2-oxoglutarate. This chain is Gamma-aminobutyrate transaminase 1, mitochondrial, found in Oryza sativa subsp. indica (Rice).